Consider the following 348-residue polypeptide: MSKETLILLYGGRSAEREVSVLSAESVMRAINYDKFFVKTYFITQVGQFIKTQEFDEMPSSDEKLMTNQTVDLDKMVRPSDIYDDNAIVFPVLHGPMGEDGSIQGFLEVLRMPYVGTNILSSSVAMDKITTKQVLATVGVPQVAYQTYFEGDDLEHAIKLSLETLSFPIFVKPANMGSSVGISKATDESSLRSAIDLALKYDSRILIEQGVTAREIEVGILGNNDVKTTFPGEVVKDVDFYDYDAKYIDNKITMDIPAKVDEATMEAMRQYASKAFKAIGACGLSRCDFFLTKDGQIFLNELNTMPGFTQWSMYPLLWENMGLTYSDLIEKLVMLAKEMFEKRESHLI.

The ATP-grasp domain maps to lysine 132–methionine 334. Leucine 162–glutamate 217 serves as a coordination point for ATP. Mg(2+) is bound by residues aspartate 288, glutamate 301, and asparagine 303.

This sequence belongs to the D-alanine--D-alanine ligase family. It depends on Mg(2+) as a cofactor. The cofactor is Mn(2+).

The protein resides in the cytoplasm. The catalysed reaction is 2 D-alanine + ATP = D-alanyl-D-alanine + ADP + phosphate + H(+). It functions in the pathway cell wall biogenesis; peptidoglycan biosynthesis. Functionally, cell wall formation. The sequence is that of D-alanine--D-alanine ligase from Streptococcus agalactiae serotype Ia (strain ATCC 27591 / A909 / CDC SS700).